A 218-amino-acid chain; its full sequence is Cytochrome b6 (218 aa).

Residues 35–55 (IFYCLGGITLVCFLVQFATGF) form a helical membrane-spanning segment. C38 contacts heme c. Positions 89 and 103 each coordinate heme b. The next 3 helical transmembrane spans lie at 93-113 (ASMM…TGGF), 119-139 (LTWV…VTGY), and 189-209 (LHTF…FLMI). Residues H190 and H205 each coordinate heme b.

This sequence belongs to the cytochrome b family. PetB subfamily. The 4 large subunits of the cytochrome b6-f complex are cytochrome b6, subunit IV (17 kDa polypeptide, PetD), cytochrome f and the Rieske protein, while the 4 small subunits are PetG, PetL, PetM and PetN. The complex functions as a dimer. Heme b serves as cofactor. Requires heme c as cofactor.

Its subcellular location is the cellular thylakoid membrane. In terms of biological role, component of the cytochrome b6-f complex, which mediates electron transfer between photosystem II (PSII) and photosystem I (PSI), cyclic electron flow around PSI, and state transitions. In Prochlorococcus marinus (strain MIT 9303), this protein is Cytochrome b6.